We begin with the raw amino-acid sequence, 931 residues long: Isoleucine--tRNA ligase (931 aa).

The 'HIGH' region signature appears at 57 to 67; sequence PFANGNIHMGH. L-isoleucyl-5'-AMP is bound at residue Glu556. A 'KMSKS' region motif is present at residues 597–601; sequence KMSKS. Lys600 provides a ligand contact to ATP. Cys890, Cys893, Cys910, and Cys913 together coordinate Zn(2+).

It belongs to the class-I aminoacyl-tRNA synthetase family. IleS type 1 subfamily. Monomer. Requires Zn(2+) as cofactor.

The protein localises to the cytoplasm. It catalyses the reaction tRNA(Ile) + L-isoleucine + ATP = L-isoleucyl-tRNA(Ile) + AMP + diphosphate. Catalyzes the attachment of isoleucine to tRNA(Ile). As IleRS can inadvertently accommodate and process structurally similar amino acids such as valine, to avoid such errors it has two additional distinct tRNA(Ile)-dependent editing activities. One activity is designated as 'pretransfer' editing and involves the hydrolysis of activated Val-AMP. The other activity is designated 'posttransfer' editing and involves deacylation of mischarged Val-tRNA(Ile). The protein is Isoleucine--tRNA ligase of Lactobacillus delbrueckii subsp. bulgaricus (strain ATCC BAA-365 / Lb-18).